We begin with the raw amino-acid sequence, 295 residues long: MLSDSDRVRVLSEALPYLQAFAGRTFVVKYGGAAMKEEQLKDSVIRDIVFLSYVGIRPVVVHGGGPEINTWLAKLNIEPQFKNGLRVTDAATMDVVEMVLVGRVNKEIVTLINQAGGQAVGLCGKDGNLIRARAKGEESIGFVGEVQGVDTRVITALVEKGYIPVISSVAADDTGQAYNINADTVAGEIAAALGAEKLILLTDTAGILRDYRDPSTLIYRLDIAEARQLIKDGVVSGGMIPKVTCCVRSLAQGVKAAHIIDGRVPHALLLEIFTDSGIGSMLVGSNAAYDSAFSG.

Substrate is bound by residues 64-65 (GG), arginine 86, and asparagine 179.

The protein belongs to the acetylglutamate kinase family. ArgB subfamily.

Its subcellular location is the cytoplasm. It carries out the reaction N-acetyl-L-glutamate + ATP = N-acetyl-L-glutamyl 5-phosphate + ADP. The protein operates within amino-acid biosynthesis; L-arginine biosynthesis; N(2)-acetyl-L-ornithine from L-glutamate: step 2/4. In terms of biological role, catalyzes the ATP-dependent phosphorylation of N-acetyl-L-glutamate. The polypeptide is Acetylglutamate kinase (Thermosynechococcus vestitus (strain NIES-2133 / IAM M-273 / BP-1)).